A 124-amino-acid polypeptide reads, in one-letter code: MPTINQLVRQGRKPVKYKSAAPALEGNPQKRGVCVVVKTTTPKKPNSALRKIARVRLTNGTEVTAYIPGIGHNLQEHSVVLVRGGRVKDLPGVRYKIIRGALDAAGVANRKQARSRYGAKKPKK.

Residue D89 is modified to 3-methylthioaspartic acid.

It belongs to the universal ribosomal protein uS12 family. As to quaternary structure, part of the 30S ribosomal subunit. Contacts proteins S8 and S17. May interact with IF1 in the 30S initiation complex.

Functionally, with S4 and S5 plays an important role in translational accuracy. Interacts with and stabilizes bases of the 16S rRNA that are involved in tRNA selection in the A site and with the mRNA backbone. Located at the interface of the 30S and 50S subunits, it traverses the body of the 30S subunit contacting proteins on the other side and probably holding the rRNA structure together. The combined cluster of proteins S8, S12 and S17 appears to hold together the shoulder and platform of the 30S subunit. The protein is Small ribosomal subunit protein uS12 of Thermoanaerobacter pseudethanolicus (strain ATCC 33223 / 39E) (Clostridium thermohydrosulfuricum).